A 167-amino-acid polypeptide reads, in one-letter code: Respiratory supercomplex factor 1-A, mitochondrial (167 aa).

The HIG1 domain maps to 1 to 86 (MCSDFEEETS…TERKQRREFE (86 aa)). Transmembrane regions (helical) follow at residues 21-38 (EPLIPLGCAATCYALYRA) and 53-75 (MFRARIYAQFFTLLAVVAGGMYY). A coiled-coil region spans residues 75–107 (YKTERKQRREFEKKVEERKAQEKRDAWLRELEA).

It belongs to the RCF1 family. In terms of assembly, associates with the respiratory chain complex III/complex IV supercomplex.

Its subcellular location is the mitochondrion membrane. In terms of biological role, cytochrome c oxidase subunit which plays a role in assembly of respiratory supercomplexes. This is Respiratory supercomplex factor 1-A, mitochondrial (rcf1-A) from Talaromyces marneffei (strain ATCC 18224 / CBS 334.59 / QM 7333) (Penicillium marneffei).